A 532-amino-acid polypeptide reads, in one-letter code: Undecaprenyl-phosphate glucose phosphotransferase (532 aa).

Helical transmembrane passes span 81 to 101, 110 to 130, 155 to 175, 183 to 203, and 344 to 364; these read QVVVLSDAFCVCLAVVACIAW, ELSGALLLANIMAAGAFFLFP, VAFGEVVFCTVLVMLSWPFGV, WLTFVVAILFVERCVGTYILH, and TASVLLLLALAPLLTLVALAI.

It belongs to the bacterial sugar transferase family.

The protein resides in the membrane. The catalysed reaction is di-trans,octa-cis-undecaprenyl phosphate + UDP-alpha-D-glucose = alpha-D-glucosyl di-trans,octa-cis-undecaprenyl diphosphate + UMP. Its function is as follows. Involved in the biosynthesis of the exopolysaccharide acetan, a water-soluble polysaccharide involved in production of bacterial cellulose (BC). This Komagataeibacter xylinus (Gluconacetobacter xylinus) protein is Undecaprenyl-phosphate glucose phosphotransferase (aceA).